The sequence spans 162 residues: Probable chemoreceptor glutamine deamidase CheD (162 aa).

This sequence belongs to the CheD family.

The enzyme catalyses L-glutaminyl-[protein] + H2O = L-glutamyl-[protein] + NH4(+). In terms of biological role, probably deamidates glutamine residues to glutamate on methyl-accepting chemotaxis receptors (MCPs), playing an important role in chemotaxis. In Pyrococcus horikoshii (strain ATCC 700860 / DSM 12428 / JCM 9974 / NBRC 100139 / OT-3), this protein is Probable chemoreceptor glutamine deamidase CheD.